The following is a 469-amino-acid chain: Glutamate--tRNA ligase (469 aa).

Residues 11–21 (PSPTGFIHLGN) carry the 'HIGH' region motif. The short motif at 243-247 (KMSKR) is the 'KMSKS' region element. Lys-246 contributes to the ATP binding site.

The protein belongs to the class-I aminoacyl-tRNA synthetase family. Glutamate--tRNA ligase type 1 subfamily. In terms of assembly, monomer.

It localises to the cytoplasm. It catalyses the reaction tRNA(Glu) + L-glutamate + ATP = L-glutamyl-tRNA(Glu) + AMP + diphosphate. Catalyzes the attachment of glutamate to tRNA(Glu) in a two-step reaction: glutamate is first activated by ATP to form Glu-AMP and then transferred to the acceptor end of tRNA(Glu). In Burkholderia cenocepacia (strain HI2424), this protein is Glutamate--tRNA ligase.